Reading from the N-terminus, the 842-residue chain is Elongation factor 2 (842 aa).

Residues 17-253 (TNVRNMSVIA…LWGDSYFNPK (237 aa)) enclose the tr-type G domain. GTP is bound by residues 26 to 33 (AHVDHGKS), 158 to 161 (NKVD), and 213 to 215 (SGL). A Diphthamide modification is found at H699.

This sequence belongs to the TRAFAC class translation factor GTPase superfamily. Classic translation factor GTPase family. EF-G/EF-2 subfamily.

It localises to the cytoplasm. The enzyme catalyses GTP + H2O = GDP + phosphate + H(+). Functionally, catalyzes the GTP-dependent ribosomal translocation step during translation elongation. During this step, the ribosome changes from the pre-translocational (PRE) to the post-translocational (POST) state as the newly formed A-site-bound peptidyl-tRNA and P-site-bound deacylated tRNA move to the P and E sites, respectively. Catalyzes the coordinated movement of the two tRNA molecules, the mRNA and conformational changes in the ribosome. In Kluyveromyces lactis (strain ATCC 8585 / CBS 2359 / DSM 70799 / NBRC 1267 / NRRL Y-1140 / WM37) (Yeast), this protein is Elongation factor 2 (EFT1).